We begin with the raw amino-acid sequence, 396 residues long: NADH-quinone oxidoreductase subunit D (396 aa).

It belongs to the complex I 49 kDa subunit family. As to quaternary structure, NDH-1 is composed of 14 different subunits. Subunits NuoB, C, D, E, F, and G constitute the peripheral sector of the complex.

Its subcellular location is the cell inner membrane. The catalysed reaction is a quinone + NADH + 5 H(+)(in) = a quinol + NAD(+) + 4 H(+)(out). NDH-1 shuttles electrons from NADH, via FMN and iron-sulfur (Fe-S) centers, to quinones in the respiratory chain. The immediate electron acceptor for the enzyme in this species is believed to be ubiquinone. Couples the redox reaction to proton translocation (for every two electrons transferred, four hydrogen ions are translocated across the cytoplasmic membrane), and thus conserves the redox energy in a proton gradient. The chain is NADH-quinone oxidoreductase subunit D from Rhodopseudomonas palustris (strain BisB18).